A 227-amino-acid polypeptide reads, in one-letter code: Cytochrome c oxidase subunit 2 (227 aa).

Residues 1 to 14 (MAYPMQLGFQDATS) lie on the Mitochondrial intermembrane side of the membrane. A helical membrane pass occupies residues 15–45 (PIMEELLHFHDHTLMIVFLISSLVLYVISLM). At 46–59 (LTTKLTHTSTMDAQ) the chain is on the mitochondrial matrix side. A helical transmembrane segment spans residues 60 to 87 (EVETIWTILPAIILILIALPSLRILYMM). Over 88 to 227 (DEINNPSLTV…YFEKWSASML (140 aa)) the chain is Mitochondrial intermembrane. Cu cation contacts are provided by H161, C196, E198, C200, H204, and M207. Position 198 (E198) interacts with Mg(2+).

It belongs to the cytochrome c oxidase subunit 2 family. In terms of assembly, component of the cytochrome c oxidase (complex IV, CIV), a multisubunit enzyme composed of 14 subunits. The complex is composed of a catalytic core of 3 subunits MT-CO1, MT-CO2 and MT-CO3, encoded in the mitochondrial DNA, and 11 supernumerary subunits COX4I, COX5A, COX5B, COX6A, COX6B, COX6C, COX7A, COX7B, COX7C, COX8 and NDUFA4, which are encoded in the nuclear genome. The complex exists as a monomer or a dimer and forms supercomplexes (SCs) in the inner mitochondrial membrane with NADH-ubiquinone oxidoreductase (complex I, CI) and ubiquinol-cytochrome c oxidoreductase (cytochrome b-c1 complex, complex III, CIII), resulting in different assemblies (supercomplex SCI(1)III(2)IV(1) and megacomplex MCI(2)III(2)IV(2)). Found in a complex with TMEM177, COA6, COX18, COX20, SCO1 and SCO2. Interacts with TMEM177 in a COX20-dependent manner. Interacts with COX20. Interacts with COX16. Cu cation is required as a cofactor.

It localises to the mitochondrion inner membrane. The enzyme catalyses 4 Fe(II)-[cytochrome c] + O2 + 8 H(+)(in) = 4 Fe(III)-[cytochrome c] + 2 H2O + 4 H(+)(out). In terms of biological role, component of the cytochrome c oxidase, the last enzyme in the mitochondrial electron transport chain which drives oxidative phosphorylation. The respiratory chain contains 3 multisubunit complexes succinate dehydrogenase (complex II, CII), ubiquinol-cytochrome c oxidoreductase (cytochrome b-c1 complex, complex III, CIII) and cytochrome c oxidase (complex IV, CIV), that cooperate to transfer electrons derived from NADH and succinate to molecular oxygen, creating an electrochemical gradient over the inner membrane that drives transmembrane transport and the ATP synthase. Cytochrome c oxidase is the component of the respiratory chain that catalyzes the reduction of oxygen to water. Electrons originating from reduced cytochrome c in the intermembrane space (IMS) are transferred via the dinuclear copper A center (CU(A)) of subunit 2 and heme A of subunit 1 to the active site in subunit 1, a binuclear center (BNC) formed by heme A3 and copper B (CU(B)). The BNC reduces molecular oxygen to 2 water molecules using 4 electrons from cytochrome c in the IMS and 4 protons from the mitochondrial matrix. This chain is Cytochrome c oxidase subunit 2 (MT-CO2), found in Gazella spekei (Speke's gazelle).